Here is a 431-residue protein sequence, read N- to C-terminus: Adenylosuccinate synthetase (431 aa).

GTP contacts are provided by residues 13 to 19 (GDEGKGK) and 41 to 43 (GHT). Aspartate 14 acts as the Proton acceptor in catalysis. 2 residues coordinate Mg(2+): aspartate 14 and glycine 41. IMP is bound by residues 14–17 (DEGK), 39–42 (NAGH), threonine 130, arginine 144, glutamine 225, threonine 240, and arginine 304. Histidine 42 serves as the catalytic Proton donor. 300-306 (ATTGRAR) serves as a coordination point for substrate. Residues arginine 306, 332-334 (KLD), and 415-417 (STG) each bind GTP.

The protein belongs to the adenylosuccinate synthetase family. Homodimer. It depends on Mg(2+) as a cofactor.

The protein resides in the cytoplasm. It carries out the reaction IMP + L-aspartate + GTP = N(6)-(1,2-dicarboxyethyl)-AMP + GDP + phosphate + 2 H(+). It functions in the pathway purine metabolism; AMP biosynthesis via de novo pathway; AMP from IMP: step 1/2. In terms of biological role, plays an important role in the de novo pathway of purine nucleotide biosynthesis. Catalyzes the first committed step in the biosynthesis of AMP from IMP. The protein is Adenylosuccinate synthetase of Ectopseudomonas mendocina (strain ymp) (Pseudomonas mendocina).